A 76-amino-acid chain; its full sequence is Putative protein StbC (76 aa).

This is Putative protein StbC (stbC) from Escherichia coli.